Here is a 167-residue protein sequence, read N- to C-terminus: MSLALRGELVVDKTKRKKRRELSEEQKQEIKDAFELFDTDKDQAIDYHELKVAMRALGFDVKKADVLKILKDYDREATGKITFEDFNEVVTDWILERDPHEEILKAFKLFDDDDSGKISLRNLRRVARELGENMSDEELRAMIEEFDKDGDGEINQEEFIAIMTGDI.

4 EF-hand domains span residues 25–60, 61–96, 98–133, and 134–167; these read EQKQ…LGFD, VKKA…WILE, DPHE…LGEN, and MSDE…TGDI. Ca(2+)-binding residues include D38, D40, D42, and E49. S135 is modified (phosphoserine). D147, D149, D151, E153, and E158 together coordinate Ca(2+).

Belongs to the centrin family. Monomer. Component of the TREX-2 complex (transcription and export complex 2), composed of at least ENY2, GANP, PCID2, SEM1, and either centrin CETN2 or CETN3. Interacts with USP49.

Its subcellular location is the cytoplasm. It localises to the cytoskeleton. It is found in the microtubule organizing center. The protein localises to the centrosome. The protein resides in the nucleus. Its subcellular location is the nucleolus. It localises to the nucleus envelope. It is found in the nuclear pore complex. The protein localises to the centriole. In terms of biological role, plays a fundamental role in microtubule-organizing center structure and function. Its function is as follows. As a component of the TREX-2 complex, involved in the export of mRNAs to the cytoplasm through the nuclear pores. The protein is Centrin-3 (Cetn3) of Mus musculus (Mouse).